The primary structure comprises 141 residues: Cystatin (141 aa).

The signal sequence occupies residues 1–26 (MVHSQLPVAGPLRLLCALLLLPSATM). The Cystatin domain occupies 29-129 (GGLSPRSVTD…CRFQVWSRPW (101 aa)). The Secondary area of contact signature appears at 73–77 (QVVSG). Cystine bridges form between Cys-91–Cys-107 and Cys-120–Cys-140.

Belongs to the cystatin family. In terms of tissue distribution, expressed at a low level by the venom gland (at protein level).

The protein resides in the secreted. Functionally, inhibits various C1 cysteine proteases including cathepsin L, papain and cathepsin B. This protein has no toxic activity and its function in the venom is unknown. It may play a role as a housekeeping or regulatory protein. This chain is Cystatin, found in Pseudechis porphyriacus (Red-bellied black snake).